Here is a 167-residue protein sequence, read N- to C-terminus: Cell division protein SepF (167 aa).

Residues 25 to 64 (EEDVAPVNNSTFQEKKHKKRSAVQRKQKNSDQEGDSVVPL) are disordered. Basic residues predominate over residues 39 to 51 (KKHKKRSAVQRKQ).

The protein belongs to the SepF family. In terms of assembly, homodimer. Interacts with FtsZ.

The protein localises to the cytoplasm. Its function is as follows. Cell division protein that is part of the divisome complex and is recruited early to the Z-ring. Probably stimulates Z-ring formation, perhaps through the cross-linking of FtsZ protofilaments. Its function overlaps with FtsA. This Natranaerobius thermophilus (strain ATCC BAA-1301 / DSM 18059 / JW/NM-WN-LF) protein is Cell division protein SepF.